The following is a 301-amino-acid chain: Transcription elongation factor A protein 1 (301 aa).

Met-1 carries the N-acetylmethionine modification. One can recognise a TFIIS N-terminal domain in the interval 3–80 (DEVVRIAKKM…KSWKKLLDGP (78 aa)). Residue Lys-55 forms a Glycyl lysine isopeptide (Lys-Gly) (interchain with G-Cter in ubiquitin) linkage. Phosphoserine occurs at positions 57, 81, 97, and 100. Over residues 76–93 (LLDGPSTDKDPEEKKKEP) the composition is skewed to basic and acidic residues. Residues 76–139 (LLDGPSTDKD…FPRAPSTSDS (64 aa)) are disordered. Positions 140–256 (VRLKCREMLA…EHQMAKTGGT (117 aa)) constitute a TFIIS central domain. Residues 259–299 (DLFTCGKCKKKNCTYTQVQTRSADEPMTTFVVCNECGNRWK) form a TFIIS-type zinc finger. Residues Cys-263, Cys-266, Cys-291, and Cys-294 each contribute to the Zn(2+) site.

It belongs to the TFS-II family. Interacts with EAF2. Associates with UBR5 and forms a transcription regulatory complex made of CDK9, Pol II, UBR5 and TCEA1/TFIIS. Part of TBP-based Pol II pre-initiation complex (PIC), in which Pol II core assembles with general transcription factors and other specific initiation factors including GTF2E1, GTF2E2, GTF2F1, GTF2F2, TCEA1, ERCC2, ERCC3, GTF2H2, GTF2H3, GTF2H4, GTF2H5, GTF2A1, GTF2A2, GTF2B and TBP; this large multi-subunit PIC complex mediates DNA unwinding and targets Pol II core to the transcription start site where the first phosphodiester bond forms.

The protein resides in the nucleus. Its function is as follows. Necessary for efficient RNA polymerase II transcription elongation past template-encoded arresting sites. The arresting sites in DNA have the property of trapping a certain fraction of elongating RNA polymerases that pass through, resulting in locked ternary complexes. Cleavage of the nascent transcript by S-II allows the resumption of elongation from the new 3'-terminus. The protein is Transcription elongation factor A protein 1 (Tcea1) of Mus musculus (Mouse).